The primary structure comprises 297 residues: Vacuolar protein sorting-associated protein 26C (297 aa).

This sequence belongs to the VPS26 family. In terms of assembly, component of the commander complex that is essential for endosomal recycling of transmembrane cargos; the commander complex is composed of the CCC subcomplex and the retriever subcomplex. Component of the heterotrimeric retriever complex consisting of VPS26C, VPS29 and VPS35L; within the complex interacts with VPS35L. Interacts with SNX17 (via C-terminus); the interaction is direct and associates SNX17 with the retriever complex. Interacts with SNX31; the interaction is direct.

The protein resides in the endosome. Component of the commander complex that is essential for endosomal recycling of transmembrane cargos; the commander complex is composed of the CCC subcomplex and the retriever subcomplex. Component of the retriever complex, which is a heterotrimeric complex related to retromer cargo-selective complex (CSC) and essential for retromer-independent retrieval and recycling of numerous cargos such as integrin alpha-5/beta-1 (ITGA5:ITGB1). The recruitment of the retriever complex to the endosomal membrane involves CCC and WASH complexes. In the endosomes, drives the retriever and recycling of NxxY-motif-containing cargo proteins by coupling to SNX17, a cargo essential for the homeostatic maintenance of numerous cell surface proteins associated with processes that include cell migration, cell adhesion, nutrient supply and cell signaling. This Mus musculus (Mouse) protein is Vacuolar protein sorting-associated protein 26C.